We begin with the raw amino-acid sequence, 208 residues long: MADTKKLKGLLLSPVMDNNPIALQILGICSALAVTTKLETAIVMTFAVIFVTAFSNLFISLIRNYIPNSVRIIVQMAIIASLVILVDQILRAYAYGLSKQLSVFVGLIITNCIVMGRAEAFAMKSQPLESFVDGIGNGLGYGAILVSVAFIRELIGSGKLFGMTVFQTIQDGGWYQTNGLFLLAPSAFFIIGFIIWGIRTLKPNQVEK.

5 helical membrane-spanning segments follow: residues 42–62, 70–90, 103–123, 131–151, and 178–198; these read IVMT…ISLI, VRII…DQIL, VFVG…AFAM, FVDG…VAFI, and NGLF…IWGI.

It belongs to the NqrDE/RnfAE family. As to quaternary structure, composed of six subunits; NqrA, NqrB, NqrC, NqrD, NqrE and NqrF.

It is found in the cell inner membrane. It carries out the reaction a ubiquinone + n Na(+)(in) + NADH + H(+) = a ubiquinol + n Na(+)(out) + NAD(+). In terms of biological role, NQR complex catalyzes the reduction of ubiquinone-1 to ubiquinol by two successive reactions, coupled with the transport of Na(+) ions from the cytoplasm to the periplasm. NqrA to NqrE are probably involved in the second step, the conversion of ubisemiquinone to ubiquinol. The polypeptide is Na(+)-translocating NADH-quinone reductase subunit D (Pasteurella multocida (strain Pm70)).